Reading from the N-terminus, the 451-residue chain is Probable plasmid replicative DNA helicase (451 aa).

The region spanning 194-451 (NDSFYDGLPT…SKFSAIKKVW (258 aa)) is the SF4 helicase domain. ATP is bound at residue 225 to 232 (ARPSIGKT).

The protein belongs to the helicase family. DnaB subfamily. As to quaternary structure, homohexamer.

It catalyses the reaction Couples ATP hydrolysis with the unwinding of duplex DNA at the replication fork by translocating in the 5'-3' direction. This creates two antiparallel DNA single strands (ssDNA). The leading ssDNA polymer is the template for DNA polymerase III holoenzyme which synthesizes a continuous strand.. It carries out the reaction ATP + H2O = ADP + phosphate + H(+). In terms of biological role, a replicative DNA helicase, it participates in initiation and elongation during DNA replication. Travels ahead of the DNA replisome, separating dsDNA into templates for DNA synthesis. A processive ATP-dependent 5'-3' DNA helicase it has DNA-dependent ATPase activity. This Chlamydia muridarum (strain MoPn / Nigg) protein is Probable plasmid replicative DNA helicase.